A 525-amino-acid polypeptide reads, in one-letter code: Lymphocyte activation gene 3 protein (525 aa).

An N-terminal signal peptide occupies residues M1 to P22. The Extracellular portion of the chain corresponds to L23–L450. An Ig-like V-type domain is found at G37 to G167. Residues G37–S252 form an interaction with FGL1 region. A disulfide bridge connects residues C44 and C160. Positions T62–R97 are disordered. Residues S69 to A87 are compositionally biased toward pro residues. An Ig-like C2-type 1 domain is found at Q168–S252. The N-linked (GlcNAc...) asparagine glycan is linked to N188. C189 and C241 are joined by a disulfide. 2 N-linked (GlcNAc...) asparagine glycosylation sites follow: N250 and N256. 2 Ig-like C2-type domains span residues P265–N343 and L348–R419. An intrachain disulfide couples C282 to C333. A glycan (N-linked (GlcNAc...) asparagine) is linked at N343. An intrachain disulfide couples C369 to C412. The segment at E429 to L450 is connecting peptide. A helical membrane pass occupies residues L451–F471. Over H472–L525 the chain is Cytoplasmic. Residues E487–L525 form a disordered region. The short motif at K498 to E503 is the KIEELE motif element. Residues E501–Q524 are 12 X 2 AA tandem repeats of E-X. Positions L502 to L525 are enriched in acidic residues.

It belongs to the LAG3 family. In terms of assembly, interacts with MHC class II (MHC-II); selectively recognizes stable complexes of peptide and MHC-II. Interacts with FGL1 (via the Fibrinogen C-terminal domain). In terms of processing, proteolytically cleaved by ADAM10 and ADAM17 within the connecting peptide region, leading to release of Secreted lymphocyte activation gene 3 protein (sLAG-3). ADAM10 mediates constitutive cleavage, but cleavage increases following T-cell activation, whereas shedding by ADAM17 is induced by TCR signaling in a PRKCQ-dependent manner. Primarily expressed in activated T-cells and a subset of natural killer (NK) cells.

It is found in the cell membrane. It localises to the secreted. In terms of biological role, lymphocyte activation gene 3 protein: Inhibitory receptor on antigen activated T-cells. Delivers inhibitory signals upon binding to ligands, such as FGL1. FGL1 constitutes a major ligand of LAG3 and is responsible for LAG3 T-cell inhibitory function. Following TCR engagement, LAG3 associates with CD3-TCR in the immunological synapse and directly inhibits T-cell activation. May inhibit antigen-specific T-cell activation in synergy with PDCD1/PD-1, possibly by acting as a coreceptor for PDCD1/PD-1. Negatively regulates the proliferation, activation, effector function and homeostasis of both CD8(+) and CD4(+) T-cells. Also mediates immune tolerance: constitutively expressed on a subset of regulatory T-cells (Tregs) and contributes to their suppressive function. Also acts as a negative regulator of plasmacytoid dendritic cell (pDCs) activation. Binds MHC class II (MHC-II); the precise role of MHC-II-binding is however unclear. Its function is as follows. May function as a ligand for MHC class II (MHC-II) on antigen-presenting cells (APC), promoting APC activation/maturation and driving Th1 immune response. The chain is Lymphocyte activation gene 3 protein from Homo sapiens (Human).